Reading from the N-terminus, the 245-residue chain is Eukaryotic translation initiation factor 6 (245 aa).

This sequence belongs to the eIF-6 family. Monomer. Associates with the 60S ribosomal subunit.

The protein resides in the cytoplasm. It is found in the nucleus. The protein localises to the nucleolus. Functionally, binds to the 60S ribosomal subunit and prevents its association with the 40S ribosomal subunit to form the 80S initiation complex in the cytoplasm. May also be involved in ribosome biogenesis. This Ostreococcus lucimarinus (strain CCE9901) protein is Eukaryotic translation initiation factor 6.